The primary structure comprises 65 residues: Large ribosomal subunit protein bL35c (65 aa).

A compositionally biased stretch (basic residues) spans 25 to 44 (HKASKSHLLQKKSSKQRRHL). The segment at 25–45 (HKASKSHLLQKKSSKQRRHLS) is disordered.

This sequence belongs to the bacterial ribosomal protein bL35 family.

Its subcellular location is the plastid. It is found in the chloroplast. This chain is Large ribosomal subunit protein bL35c, found in Pyropia yezoensis (Susabi-nori).